Reading from the N-terminus, the 1492-residue chain is Putative leucine-rich repeat-containing protein DDB_G0290503 (1492 aa).

In terms of domain architecture, PH spans 2–111; the sequence is SILLEGYLEK…WIEGIKDAIK (110 aa). LRR repeat units lie at residues 123–144, 180–204, 258–284, 329–351, 352–375, 389–413, 439–462, 519–543, 551–575, 579–603, 632–656, 728–752, 806–830, 831–855, 895–919, 927–951, 955–979, 1013–1036, 1044–1068, 1138–1164, and 1210–1232; these read LDGL…IKHL, IKSL…VEKL, QESL…QFEK, KNQF…SIVD, DKLK…EIDN, ISKI…SIDK, LEKL…ILEI, INEL…NQSS, LNQL…IIER, IDQL…NESS, LDEL…NQSS, LKSL…NQDS, INEL…NESS, LIQL…IIER, LNQL…NQSS, NEKL…NESL, FENL…IIDV, LQDL…ELKE, and NAHL…GFNE. Residues 1272 to 1292 form a disordered region; that stretch reads RSSSSSLHQQQQMISPDLSNS. Residues 1274 to 1286 show a composition bias toward low complexity; the sequence is SSSSLHQQQQMIS. 2 LRR repeats span residues 1424-1444 and 1445-1468; these read SSEK…KYFF and AIAR…IFDM.

This chain is Putative leucine-rich repeat-containing protein DDB_G0290503, found in Dictyostelium discoideum (Social amoeba).